Reading from the N-terminus, the 451-residue chain is MKKLFGTDGVRGVANVYPMTTEMAMQIGRAAAYLFKNGNRRHRIVIGKDTRLSGYMLENALVAGICSMGVDVLVVGPLPTPGIANITSSMRADAGVVISASHNAFQDNGIKFFSRDGFKLPDEMELKIEELIFSKKIDSLRPIATEVGKAYRIDDAVGRYVVFLKNTFPKELDLTGMKIVLDCANGAAYKVAPAVLEELGAEVIPYGIKPNGTNINAGFGSLHPEVISEAVKEHRADLGIALDGDADRVIFVDEFGNEVDGDHIMAICATDMLKHKKLRKNTLVATVMSNMGLDIAVKKAGGKVIKTAVGDRYVVEEMLKGGYNLGGEQSGHMIFLDHNTTGDGMLSALQVLAIMRRSGKTLSELAEVMIPLPQVLVNVRVTEKKDIMTIPEVAALIRGVEDKLKDEGRILIRYSGTEPLLRIMLEGQDKYQITGWAKEIADLVEKKIGGK.

Residue serine 101 is the Phosphoserine intermediate of the active site. Positions 101, 243, 245, and 247 each coordinate Mg(2+). Position 101 is a phosphoserine (serine 101).

The protein belongs to the phosphohexose mutase family. Mg(2+) serves as cofactor. In terms of processing, activated by phosphorylation.

It catalyses the reaction alpha-D-glucosamine 1-phosphate = D-glucosamine 6-phosphate. Its function is as follows. Catalyzes the conversion of glucosamine-6-phosphate to glucosamine-1-phosphate. The chain is Phosphoglucosamine mutase from Geobacter metallireducens (strain ATCC 53774 / DSM 7210 / GS-15).